Reading from the N-terminus, the 107-residue chain is Large ribosomal subunit protein bL21 (107 aa).

It belongs to the bacterial ribosomal protein bL21 family. Part of the 50S ribosomal subunit. Contacts protein L20.

In terms of biological role, this protein binds to 23S rRNA in the presence of protein L20. This chain is Large ribosomal subunit protein bL21, found in Chlamydia muridarum (strain MoPn / Nigg).